A 1416-amino-acid chain; its full sequence is MSGPWPSPDSRTKGTVAWLAEVLLWVGGSVVLSSEWQLGPLVERCMGAMQEGMQMVKLRGGSKGLVRFYYLDEHRSCIRWRPSRKNEKAKISIDSIQEVSEGRQSEVFQRYPDGSFDPNCCFSIYHGSHRESLDLVSTSSEVARTWVTGLRYLMAGISDEDSLARRQRTRDQWLKQTFDEADKNGDGSLSIGEVLQLLHKLNVNLPRQRVKQMFREADTDDHQGTLGFEEFCAFYKMMSTRRDLYLLMLTYSNHKDHLDAASLQRFLQVEQKMAGVTLESCQDIIEQFEPCPENKSKGLLGIDGFTNYTRSPAGDIFNPEHHHVHQDMTQPLSHYFITSSHNTYLVGDQLMSQSRVDMYAWVLQAGCRCVEVDCWDGPDGEPIVHHGYTLTSKILFKDVIETINKYAFIKNEYPVILSIENHCSVIQQKKMAQYLTDILGDKLDLSSVSSEDATTLPSPQMLKGKILVKGKKLPANISEDAEEGEVSDEDSADEIDDDCKLLNGDASTNRKRVENTAKRKLDSLIKESKIRDCEDPNNFSVSTLSPSGKLGRKSKAEEDVESGEDAGASRRNGRLVVGSFSRRKKKGSKLKKAASVEEGDEGQDSPGGQSRGATRQKKTMKLSRALSDLVKYTKSVATHDIEMEAASSWQVSSFSETKAHQILQQKPAQYLRFNQQQLSRIYPSSYRVDSSNYNPQPFWNAGCQMVALNYQSEGRMLQLNRAKFSANGGCGYVLKPGCMCQGVFNPNSEDPLPGQLKKQLVLRIISGQQLPKPRDSMLGDRGEIIDPFVEVEIIGLPVDCSREQTRVVDDNGFNPTWEETLVFMVHMPEIALVRFLVWDHDPIGRDFIGQRTLAFSSMMPGYRHVYLEGMEEASIFVHVAVSDISGKVKQALGLKGLFLRGPKPGSLDSHAAGRPPARPSVSQRILRRTASAPTKSQKPGRRGFPELVLGTRDTGSKGVADDVVPPGPGPAPEAPAQEGPGSGSPRDTRPLSTQRPLPPLCSLETIAEEPAPGPGPPPPAAVPTSSSQGRPPYPTGPGANVASPLEDTEEPRDSRPRPCNGEGAGGAYERAPGSQTDGRSQPRTLGHLPVIRRVKSEGQVPTEPLGGWRPLAAPFPAPAVYSDATGSDPLWQRLEPCGHRDSVSSSSSMSSSDTVIDLSLPSLGLGRSRENLAGAHMGRLPPRPHSASAARPDLPPVTKSKSNPNLRATGQRPPIPDELQPRSLAPRMAGLPFRPPWGCLSLVGVQDCPVAAKSKSLGDLTADDFAPSFEGGSRRLSHSLGLPGGTRRVSGPGVRRDTLTEQLRWLTVFQQAGDITSPTSLGPAGEGVAGGPGFVRRSSSRSHSRVRAIASRARQAQERQQRLQGLGRQGPPEEERGTPEGACSVGHEGSVDAPAPSKGALGPASAAAENLVLLRL.

A necessary for plasma membrane localization region spans residues 1–155; it reads MSGPWPSPDS…WVTGLRYLMA (155 aa). The region spanning 47 to 155 is the PH domain; that stretch reads GAMQEGMQMV…WVTGLRYLMA (109 aa). 2 EF-hand domains span residues 169 to 204 and 205 to 241; these read TRDQWLKQTFDEADKNGDGSLSIGEVLQLLHKLNVN and LPRQRVKQMFREADTDDHQGTLGFEEFCAFYKMMSTR. Ca(2+) is bound by residues D182, N184, D186, S188, and E193. The region spanning 326 to 471 is the PI-PLC X-box domain; it reads QDMTQPLSHY…LKGKILVKGK (146 aa). H341 is a catalytic residue. 3 residues coordinate Ca(2+): N342, E371, and D373. The active site involves H385. E420 is a Ca(2+) binding site. The substrate site is built by K469 and K471. Phosphoserine is present on residues S487 and S491. Residues 535–620 are disordered; that stretch reads DPNNFSVSTL…RGATRQKKTM (86 aa). Positions 537 to 546 are enriched in polar residues; the sequence is NNFSVSTLSP. Residues 581–592 are compositionally biased toward basic residues; sequence SRRKKKGSKLKK. Phosphoserine occurs at positions 595 and 605. One can recognise a PI-PLC Y-box domain in the interval 626–740; the sequence is LSDLVKYTKS…GYVLKPGCMC (115 aa). Residues S653 and R680 each coordinate substrate. In terms of domain architecture, C2 spans 740–869; sequence CQGVFNPNSE…PGYRHVYLEG (130 aa). Ca(2+)-binding residues include I784, D786, D810, D839, H840, and D841. Disordered stretches follow at residues 905 to 1109, 1121 to 1222, and 1315 to 1405; these read GSLD…GGWR, YSDA…LQPR, and ITSP…GPAS. Over residues 1011 to 1021 the composition is skewed to pro residues; it reads APGPGPPPPAA. Positions 1073-1083 are enriched in polar residues; that stretch reads GSQTDGRSQPR. A compositionally biased stretch (low complexity) spans 1143–1166; that stretch reads VSSSSSMSSSDTVIDLSLPSLGLG. Residues 1199-1208 show a composition bias toward polar residues; that stretch reads KSKSNPNLRA. The segment covering 1324-1333 has biased composition (gly residues); it reads AGEGVAGGPG.

Ca(2+) is required as a cofactor. In terms of tissue distribution, expressed in retina and kidney.

It is found in the cytoplasm. The protein localises to the cell membrane. The catalysed reaction is a 1,2-diacyl-sn-glycero-3-phospho-(1D-myo-inositol-4,5-bisphosphate) + H2O = 1D-myo-inositol 1,4,5-trisphosphate + a 1,2-diacyl-sn-glycerol + H(+). Activity is stimulated by GNB1:GNG2. In terms of biological role, the production of the second messenger molecules diacylglycerol (DAG) and inositol 1,4,5-trisphosphate (IP3) is mediated by activated phosphatidylinositol-specific phospholipase C enzymes. This phospholipase activity is very sensitive to calcium. May be important for formation and maintenance of the neuronal network in the postnatal brain. The chain is 1-phosphatidylinositol 4,5-bisphosphate phosphodiesterase eta-2 from Homo sapiens (Human).